The sequence spans 115 residues: Large ribosomal subunit protein bL19 (115 aa).

The protein belongs to the bacterial ribosomal protein bL19 family.

This protein is located at the 30S-50S ribosomal subunit interface and may play a role in the structure and function of the aminoacyl-tRNA binding site. In Streptococcus uberis (strain ATCC BAA-854 / 0140J), this protein is Large ribosomal subunit protein bL19.